The primary structure comprises 356 residues: Competence protein ComGA (356 aa).

ATP is bound at residue 144–151; that stretch reads GPTGSGKT.

This sequence belongs to the GSP E family.

The protein resides in the cell membrane. In terms of biological role, required for uptake of DNA by competent cells. The sequence is that of Competence protein ComGA (comGA) from Bacillus subtilis (strain 168).